The following is a 62-amino-acid chain: Large ribosomal subunit protein uL30 (62 aa).

This sequence belongs to the universal ribosomal protein uL30 family. Part of the 50S ribosomal subunit.

This is Large ribosomal subunit protein uL30 from Nitrosospira multiformis (strain ATCC 25196 / NCIMB 11849 / C 71).